The following is a 91-amino-acid chain: N(2)-fixation sustaining protein CowN (91 aa).

The protein belongs to the CowN family.

Is required to sustain N(2)-dependent growth in the presence of low levels of carbon monoxide (CO). Probably acts by protecting the N(2) fixation ability of the nitrogenase complex, which is inactivated in the presence of CO. This Beijerinckia indica subsp. indica (strain ATCC 9039 / DSM 1715 / NCIMB 8712) protein is N(2)-fixation sustaining protein CowN.